We begin with the raw amino-acid sequence, 407 residues long: Phosphoglycerate kinase (407 aa).

Residues 24-26 (DIN), Arg-39, 60-63 (HQSR), Arg-117, and Arg-157 contribute to the substrate site. ATP is bound by residues Glu-330 and 355–358 (GGHI).

Belongs to the phosphoglycerate kinase family.

Its subcellular location is the cytoplasm. It carries out the reaction (2R)-3-phosphoglycerate + ATP = (2R)-3-phospho-glyceroyl phosphate + ADP. It functions in the pathway carbohydrate degradation; glycolysis; pyruvate from D-glyceraldehyde 3-phosphate: step 2/5. This Archaeoglobus fulgidus (strain ATCC 49558 / DSM 4304 / JCM 9628 / NBRC 100126 / VC-16) protein is Phosphoglycerate kinase (pgk).